Here is a 233-residue protein sequence, read N- to C-terminus: ATP synthase subunit a, chloroplastic (233 aa).

4 consecutive transmembrane segments (helical) span residues 27 to 47 (VLLITWLVLAIILTLAILGTL), 84 to 104 (VPFVGTLFLFIFVANWLGALI), 122 to 142 (DINTTVALSLLTSISYFYAGF), and 192 to 212 (VLCLLVPLLIPLPVMVLGIFA).

It belongs to the ATPase A chain family. As to quaternary structure, F-type ATPases have 2 components, CF(1) - the catalytic core - and CF(0) - the membrane proton channel. CF(1) has five subunits: alpha(3), beta(3), gamma(1), delta(1), epsilon(1). CF(0) has four main subunits: a, b, b' and c.

It localises to the plastid. The protein localises to the chloroplast thylakoid membrane. Key component of the proton channel; it plays a direct role in the translocation of protons across the membrane. The chain is ATP synthase subunit a, chloroplastic from Ochrosphaera neapolitana.